The chain runs to 518 residues: Glutamate--cysteine ligase (518 aa).

Belongs to the glutamate--cysteine ligase type 1 family. Type 1 subfamily.

The catalysed reaction is L-cysteine + L-glutamate + ATP = gamma-L-glutamyl-L-cysteine + ADP + phosphate + H(+). The protein operates within sulfur metabolism; glutathione biosynthesis; glutathione from L-cysteine and L-glutamate: step 1/2. This Escherichia coli O8 (strain IAI1) protein is Glutamate--cysteine ligase.